An 89-amino-acid polypeptide reads, in one-letter code: Small ribosomal subunit protein uS15 (89 aa).

Residues 1-13 (MYLTSEKKEEIFS) are compositionally biased toward basic and acidic residues. The disordered stretch occupies residues 1–24 (MYLTSEKKEEIFSKHGKGKNDTGS).

It belongs to the universal ribosomal protein uS15 family. As to quaternary structure, part of the 30S ribosomal subunit. Forms a bridge to the 50S subunit in the 70S ribosome, contacting the 23S rRNA.

In terms of biological role, one of the primary rRNA binding proteins, it binds directly to 16S rRNA where it helps nucleate assembly of the platform of the 30S subunit by binding and bridging several RNA helices of the 16S rRNA. Functionally, forms an intersubunit bridge (bridge B4) with the 23S rRNA of the 50S subunit in the ribosome. In Christiangramia forsetii (strain DSM 17595 / CGMCC 1.15422 / KT0803) (Gramella forsetii), this protein is Small ribosomal subunit protein uS15.